We begin with the raw amino-acid sequence, 547 residues long: Sodium-coupled neutral amino acid transporter 4 (547 aa).

The interval M1–I30 is disordered. Residues M1–G104 are Extracellular-facing. Phosphoserine is present on S49. The helical transmembrane segment at I105–L125 threads the bilayer. The Cytoplasmic segment spans residues L126–K151. Residues I152–I172 form a helical membrane-spanning segment. Over I173–Y195 the chain is Extracellular. Residues L196–L216 traverse the membrane as a helical segment. At K217–G220 the chain is on the cytoplasmic side. Residues Y221 to I241 form a helical membrane-spanning segment. The Extracellular segment spans residues Y242–T332. An intrachain disulfide couples C249 to C321. N260, N264, and N276 each carry an N-linked (GlcNAc...) asparagine glycan. The helical transmembrane segment at A333–Y353 threads the bilayer. At S354–N369 the chain is on the cytoplasmic side. Residues I370–F390 form a helical membrane-spanning segment. The Extracellular segment spans residues Y391–P411. A helical transmembrane segment spans residues L412–F432. The Cytoplasmic segment spans residues P433–H453. Residues F454–I474 form a helical membrane-spanning segment. The Extracellular segment spans residues K475–Y476. The chain crosses the membrane as a helical span at residues I477–F497. The Cytoplasmic segment spans residues Y498–G514. Residues A515–I535 form a helical membrane-spanning segment. Over D536–H547 the chain is Extracellular.

Belongs to the amino acid/polyamine transporter 2 family. Post-translationally, the disulfide bond plays an important role in substrate transport, but has no effect on trafficking to the cell surface. In terms of tissue distribution, expressed almost exclusively in embryonic and adult liver, and at lower levels in the kidney. Expressed at lower levels in adult muscle and pancreas. Detected in fetal blood vessels. Expressed in syncytiotrophoblas of placenta during first trimester and at term. Highly expressed in first trimester placenta compared to term placenta.

It is found in the cell membrane. The protein localises to the cell projection. It localises to the microvillus membrane. It carries out the reaction L-methionine(in) + Na(+)(in) = L-methionine(out) + Na(+)(out). The catalysed reaction is L-asparagine(in) + Na(+)(in) = L-asparagine(out) + Na(+)(out). The enzyme catalyses L-threonine(in) + Na(+)(in) = L-threonine(out) + Na(+)(out). It catalyses the reaction L-serine(in) + Na(+)(in) = L-serine(out) + Na(+)(out). It carries out the reaction glycine(in) + Na(+)(in) = glycine(out) + Na(+)(out). The catalysed reaction is L-alanine(in) + Na(+)(in) = L-alanine(out) + Na(+)(out). The enzyme catalyses L-glutamine(in) + Na(+)(in) = L-glutamine(out) + Na(+)(out). It catalyses the reaction L-histidine(in) + Na(+)(in) = L-histidine(out) + Na(+)(out). It carries out the reaction L-cysteine(in) + Na(+)(in) = L-cysteine(out) + Na(+)(out). The catalysed reaction is L-proline(in) + Na(+)(in) = L-proline(out) + Na(+)(out). Symporter that cotransports neutral amino acids and sodium ions from the extraccellular to the intracellular side of the cell membrane. The transport is electrogenic, pH dependent and partially tolerates substitution of Na(+) by Li(+). Preferentially transports smaller amino acids, such as glycine, L-alanine, L-serine, L-asparagine and L-threonine, followed by L-cysteine, L-histidine, L-proline and L-glutamine and L-methionine. The sequence is that of Sodium-coupled neutral amino acid transporter 4 from Homo sapiens (Human).